The following is a 703-amino-acid chain: MNDNLDLFSGAAPAAPESGAAPDKVLAKVQALRAQLNQWAHEYYVLDTPTVPDGEYDRVFQQLQALEGAYPELVTPDSPTQRVIGAVLDGLMPVRHAVPMLSIRTETDNEATGAEAFDARIRKELELAEGAPPVEYVAEPKFDGLAMNLRYENGRLVQATTRGDGEVGEDVTHNIRTIRKIPLSLPEGKGVPPVVEVRGEVYMGRADFVKLNERQQAAGGKSFANPRNAAAGSVRQLDSGIAAQRPLSFFAYGLGEITPAAQGGPDFVTHYAMLQTLRDWGFPVAPQVCIAKGAAELVAFHQRMGAERATLPYEIDGVVYKVNSLAQQRQLGFVSREPRWAVAHKYPAEEMPTRMEGIDIQVGRTGKLTPVARLAPVAVGGVIVTNATLHNLFEIRKKRVRTGDTVVVRRAGDVIPEVVGRVPGDRPAYVPNFRMPAACPICGSAVARPKGEANHRCTGGLFCPAQRKEAILHFAARRAMDIEGLGDKLVDQLVDGHVVRTLPDLYRLGLVALASLDRMAEKSAQNVLDALEKSKKTTLSRFLFGLGIRQVGESTAKDLARHFGQLDAIMDASVEQLLQVRDVGPIVAESIHTFFAQPHNREVVEQLRACGVHWEEGAAREQTAQPLAGMTVVLTGTLPTLGRDQAKEMLEAAGAKVSGSVSKKTSYVVAGAEAGSKLAKAEELGVTVLDEAGMLALLAGGDR.

A disordered region spans residues 1-20 (MNDNLDLFSGAAPAAPESGA). The span at 9–20 (SGAAPAAPESGA) shows a compositional bias: low complexity. NAD(+) is bound by residues 53–57 (DGEYD), 102–103 (SI), and Glu-139. Lys-141 serves as the catalytic N6-AMP-lysine intermediate. NAD(+) contacts are provided by Arg-162, Glu-200, Lys-321, and Lys-345. Zn(2+)-binding residues include Cys-439, Cys-442, Cys-457, and Cys-463. The BRCT domain occupies 622 to 703 (QTAQPLAGMT…MLALLAGGDR (82 aa)).

Belongs to the NAD-dependent DNA ligase family. LigA subfamily. Mg(2+) serves as cofactor. The cofactor is Mn(2+).

The enzyme catalyses NAD(+) + (deoxyribonucleotide)n-3'-hydroxyl + 5'-phospho-(deoxyribonucleotide)m = (deoxyribonucleotide)n+m + AMP + beta-nicotinamide D-nucleotide.. In terms of biological role, DNA ligase that catalyzes the formation of phosphodiester linkages between 5'-phosphoryl and 3'-hydroxyl groups in double-stranded DNA using NAD as a coenzyme and as the energy source for the reaction. It is essential for DNA replication and repair of damaged DNA. In Delftia acidovorans (strain DSM 14801 / SPH-1), this protein is DNA ligase.